Here is a 391-residue protein sequence, read N- to C-terminus: Rhizopuspepsin-2 (391 aa).

The N-terminal stretch at 1-21 (MKLTLISSCVALAFMALATEA) is a signal peptide. Residues 22 to 68 (APSGKKLSIPLTKNTNYKPSAKNAIQKALAKYHRFRTTSSSNSTSTE) constitute a propeptide, activation peptide. One can recognise a Peptidase A1 domain in the interval 84–388 (YYGKVTVGTP…NQEVPEVQIA (305 aa)). Aspartate 102 is a catalytic residue. Cysteine 115 and cysteine 118 are disulfide-bonded. Aspartate 285 is an active-site residue. A disulfide bridge connects residues cysteine 319 and cysteine 352.

This sequence belongs to the peptidase A1 family.

The catalysed reaction is Hydrolysis of proteins with broad specificity similar to that of pepsin A, preferring hydrophobic residues at P1 and P1'. Clots milk and activates trypsinogen. Does not cleave 4-Gln-|-His-5, but does cleave 10-His-|-Leu-11 and 12-Val-|-Glu-13 in B chain of insulin.. This is Rhizopuspepsin-2 from Rhizopus niveus.